A 166-amino-acid polypeptide reads, in one-letter code: Large ribosomal subunit protein mL41 (166 aa).

The N-terminal 26 residues, 1–26 (MNNCIKVVPIALRCQQRTISTSSVLE), are a transit peptide targeting the mitochondrion. Residues 136–166 (KDGSAKEPSVNEQLTPEEALQRARKTGSDIF) form a disordered region.

Belongs to the mitochondrion-specific ribosomal protein mL41 family. Component of the mitochondrial ribosome large subunit (39S) which comprises a 16S rRNA and about 50 distinct proteins.

The protein resides in the mitochondrion. In Drosophila melanogaster (Fruit fly), this protein is Large ribosomal subunit protein mL41 (mRpL41).